The sequence spans 208 residues: Peroxiredoxin (208 aa).

The Thioredoxin domain maps to 2–156; sequence PLLGDDFPQL…IVRAVKALQT (155 aa). The Cysteine sulfenic acid (-SOH) intermediate role is filled by Cys44. Arg119 is a binding site for substrate.

Belongs to the peroxiredoxin family. Prx6 subfamily. As to quaternary structure, homodecamer. Pentamer of dimers that assemble into a ring structure.

The protein resides in the cytoplasm. It carries out the reaction a hydroperoxide + [thioredoxin]-dithiol = an alcohol + [thioredoxin]-disulfide + H2O. In terms of biological role, thiol-specific peroxidase that catalyzes the reduction of hydrogen peroxide and organic hydroperoxides to water and alcohols, respectively. Plays a role in cell protection against oxidative stress by detoxifying peroxides. The polypeptide is Peroxiredoxin (Treponema denticola (strain ATCC 35405 / DSM 14222 / CIP 103919 / JCM 8153 / KCTC 15104)).